The following is a 431-amino-acid chain: Homeobox protein knotted-1-like 3 (431 aa).

A disordered region spans residues 15-47; it reads NHFTDQHQPPPPQPPPPPPQQQQHFQEAPPPNW. The segment covering 22–34 has biased composition (pro residues); it reads QPPPPQPPPPPPQ. The 21-residue stretch at 322-342 folds into the ELK domain; it reads ELKHELKQGYKEKIVDIREEI. The homeobox; TALE-type DNA-binding region spans 343 to 406; the sequence is LRKRRAGKLP…NQRKRNWHSN (64 aa). Residues 402 to 431 are disordered; the sequence is NWHSNPSSSTVLKNKRKSNAGDNSGRERFA. Polar residues predominate over residues 404–413; sequence HSNPSSSTVL.

It belongs to the TALE/KNOX homeobox family. As to quaternary structure, may form heterodimeric complex with the TALE/BELL proteins. Interacts with OFP1, OFP2, OFP4, OFP12 and OFP14. Interacts with KNATM-B.

It localises to the nucleus. This Arabidopsis thaliana (Mouse-ear cress) protein is Homeobox protein knotted-1-like 3 (KNAT3).